Reading from the N-terminus, the 147-residue chain is Interleukin-4 (147 aa).

The signal sequence occupies residues 1–24 (MGLPAQLPVTLLCLLAGTAHFIQG). Cys48 and Cys88 form a disulfide bridge. A glycan (N-linked (GlcNAc...) asparagine) is linked at Asn62.

Belongs to the IL-4/IL-13 family.

Its subcellular location is the secreted. Its function is as follows. Participates in at least several B-cell activation processes as well as of other cell types. It is a costimulator of DNA-synthesis. It induces the expression of class II MHC molecules on resting B-cells. It enhances both secretion and cell surface expression of IgE and IgG1. It also regulates the expression of the low affinity Fc receptor for IgE (CD23) on both lymphocytes and monocytes. Positively regulates IL31RA expression in macrophages. Stimulates autophagy in dendritic cells by interfering with mTORC1 signaling and through the induction of RUFY4. In Oryctolagus cuniculus (Rabbit), this protein is Interleukin-4 (IL4).